The primary structure comprises 299 residues: Transcription factor MYB17 (299 aa).

HTH myb-type domains lie at 9 to 61 (KIGL…TNYL) and 62 to 116 (RPDI…KKRL). 2 DNA-binding regions (H-T-H motif) span residues 37-61 (WRTL…TNYL) and 89-112 (WAAI…NTHL).

Interacts with LFY. Expressed in the shoot apex, young flower buds, developing carpels and siliques. Expressed in floral meristem, initiating floral primordia and developing flowers.

It localises to the nucleus. Its function is as follows. Transcription factor that may play a role in flower development by repressing ANT. Regulates the transition of meristem identity from vegetative growth to flowering. Acts downstream of LFY and upstream of AP1. Directly activates AP1 to promote floral fate. Together with LFY and AP1 may constitute a regulatory network that contributes to an abrupt and robust meristem identity transition. This Arabidopsis thaliana (Mouse-ear cress) protein is Transcription factor MYB17.